A 61-amino-acid polypeptide reads, in one-letter code: Early E3 6.4 kDa protein (61 aa).

The interval 1-25 (MGNAGPLKLHTITKPGTIPYPPHGS) is disordered.

This Homo sapiens (Human) protein is Early E3 6.4 kDa protein.